We begin with the raw amino-acid sequence, 222 residues long: uncharacterized protein (222 aa).

This is an uncharacterized protein from Archaeoglobus fulgidus (strain ATCC 49558 / DSM 4304 / JCM 9628 / NBRC 100126 / VC-16).